The following is a 1304-amino-acid chain: Zinc finger CCCH domain-containing protein 4 (1304 aa).

Residues 1–33 (MEAVPGTPPPPPSESPPPPSPPPPSTPSPPPCS) show a composition bias toward pro residues. The segment at 1–387 (MEAVPGTPPP…SDHDKPHQQS (387 aa)) is disordered. Residues 53–73 (DREDGELEEGELEDDGAEEVQ) are compositionally biased toward acidic residues. Basic and acidic residues predominate over residues 80–99 (ERSRKEKGEKHHSDSEEEKS). Phosphoserine occurs at positions 92 and 94. Positions 94–128 (SEEEKSHRRLKRKRKKEREKEKRRSKKRRKSKHKR) form a coiled coil. Positions 100–130 (HRRLKRKRKKEREKEKRRSKKRRKSKHKRHA) are enriched in basic residues. Acidic residues predominate over residues 135 to 144 (DFSDFSDDSD). Tyrosine 155 is subject to Phosphotyrosine. Over residues 165 to 174 (SHQQYSSSHN) the composition is skewed to polar residues. The span at 194–218 (EDYENEQYGEYEGDEEEDMGKEDYD) shows a compositional bias: acidic residues. A compositionally biased stretch (basic and acidic residues) spans 219–235 (DFTKELNQYRRAKEGSS). Residues 238–251 (RGSRGRGRGYRGRG) are compositionally biased toward basic residues. Residues 252–264 (SRGGSRGRGMGRG) show a composition bias toward gly residues. A compositionally biased stretch (acidic residues) spans 277 to 303 (PEDEEDLYEEEIEYGESEEPMGDDDYD). Residues 304–320 (DYSKELNQYRRSKDSRG) are compositionally biased toward basic and acidic residues. Residues 322-346 (GLSRGRGRGSRGGRGKGMGRGRGRG) show a composition bias toward basic residues. Acidic residues predominate over residues 357–368 (NDDEDFYDDDMG). The span at 376–387 (RRSDHDKPHQQS) shows a compositional bias: basic and acidic residues. 3 consecutive C3H1-type zinc fingers follow at residues 389–416 (KKGK…HDIE), 418–445 (PKKR…HGDF), and 446–469 (PCKL…HDPL). A compositionally biased stretch (acidic residues) spans 485–495 (AEAGAEDEKEV). The interval 485–567 (AEAGAEDEKE…LPTHEPLSPQ (83 aa)) is disordered. Composition is skewed to pro residues over residues 506 to 529 (LPKP…PAPT) and 538 to 556 (GGPP…PPQM). Asymmetric dimethylarginine is present on arginine 599. 3 disordered regions span residues 601–691 (PGPG…DSPH), 719–970 (PGLV…SHIK), and 994–1304 (LPIP…PFCQ). Residues 603–622 (PGGPSGPMGPGPNMGPPGPM) are compositionally biased toward pro residues. Positions 628 to 660 (PDMHPDMHPDMHPDMHPDMHPDMHPDMHPDMHP) are enriched in basic and acidic residues. Positions 669–683 (NPGPPMGPGGPPMMP) are enriched in pro residues. A coiled-coil region spans residues 778 to 809 (ALYLRIQQKQQEEERARRLAESSKQDRENEEG). The segment covering 787-804 (QQEEERARRLAESSKQDR) has biased composition (basic and acidic residues). 2 positions are modified to phosphoserine: serine 816 and serine 817. The span at 824 to 852 (SSVTSILKTLRQQTSSRPQASVGEPSSSG) shows a compositional bias: polar residues. The span at 869–884 (SDPRLSRDPRLSRHAE) shows a compositional bias: basic and acidic residues. A phosphoserine mark is found at serine 913, serine 916, and serine 917. Residues 913–929 (SLHSSPAGPSSSKGQPP) show a composition bias toward low complexity. Over residues 994–1005 (LPIPKQDVPPVP) the composition is skewed to pro residues. Polar residues-rich tracts occupy residues 1028-1044 (NTRQ…SGSN) and 1058-1067 (VNVNTPGQSE). Residues 1068–1085 (KPSDPRVRKTPTDPRLQK) show a composition bias toward basic and acidic residues. Low complexity-rich tracts occupy residues 1098–1129 (PCPT…VLAA) and 1137–1146 (SSGQSSVLSG). Serine 1104, serine 1109, serine 1111, and serine 1115 each carry phosphoserine. Threonine 1119 carries the post-translational modification Phosphothreonine. A compositionally biased stretch (polar residues) spans 1204–1220 (KASTDGATATDRYNSYN). Residues 1225–1235 (KATAAPTAASS) are compositionally biased toward low complexity. A phosphoserine mark is found at serine 1270 and serine 1276.

It belongs to the suppressor of sable family. As to quaternary structure, interacts with WDR82.

It localises to the chromosome. RNA-binding protein that suppresses transcription of long non-coding RNAs (lncRNAs). LncRNAs are defined as transcripts more than 200 nucleotides that are not translated into protein. Together with WDR82, part of a transcription termination checkpoint that promotes transcription termination of lncRNAs and their subsequent degradation by the exosome. The transcription termination checkpoint is activated by the inefficiently spliced first exon of lncRNAs. In Mus musculus (Mouse), this protein is Zinc finger CCCH domain-containing protein 4.